Here is a 247-residue protein sequence, read N- to C-terminus: MAGHSKWKNIQRRKNAQDAKRGKLFMKLAKEIYVAAKNGGGDPAANPSLRLVIEKAKAANMPGENIERAIKKATGNQEHTNYEEIRYEGYGPGGVAVMVVCLTDNKNRTAANVRSAFSKNGGNLGETGCVSYLFERKGLLVIDREQHNMEEDELLLLAIEAGAEEMETTDESFEIYTTPESFETVKEQLEQQGLTFASAEITMIPQTYTTLSGDELKKMLKLIDTLEDDDDVQEVYHNLDESVIEEQ.

The span at 1–14 (MAGHSKWKNIQRRK) shows a compositional bias: basic residues. The disordered stretch occupies residues 1 to 21 (MAGHSKWKNIQRRKNAQDAKR).

It belongs to the TACO1 family.

It localises to the cytoplasm. The sequence is that of Probable transcriptional regulatory protein GTNG_2524 from Geobacillus thermodenitrificans (strain NG80-2).